We begin with the raw amino-acid sequence, 765 residues long: Ankyrin repeat and protein kinase domain-containing protein 1 (765 aa).

The Protein kinase domain occupies 22–289 (EGDWRLVASG…DITIETDILL (268 aa)). Residues 28–36 (VASGGFSQV) and Lys51 contribute to the ATP site. Asp145 acts as the Proton acceptor in catalysis. ANK repeat units lie at residues 361–390 (NKVTPLHFLVAQGSVEQVRLLLAHEVDVDC), 394–423 (SGYTPLLIAAQDQQPDLCALLLAHGADANR), 427–456 (DGWAPLHFAAQNGDDGTARLLLDHGACVDA), 460–489 (EGWTPLHLAAQNNFENVARLLVSRQADPNL), 493–522 (EGKTPLHVAAYFGHVSLVKLLTSQGAELDA), 526–555 (NLRTPLHLAVERGKVRAIQHLLKSGAVPDA), 559–588 (SGYGPLHTAAARGKYLICKMLLRYGASLEL), 592–621 (QGWTPLHLAAYKGHLEIIHLLAESHANMGA), 625–654 (VNWTPLHLAARHGEEAVVSALLQCGADPNA), 658–687 (SGWTPLHLAVQRSTFLSVINLLEHHANVHA), 691–720 (VGWTPAHLAALKGNTAILKVLVEAGAQLDV), and 724–753 (VSCTPLQLALRSRKQGIMSFLEGKEPSVAT).

This sequence belongs to the protein kinase superfamily. TKL Ser/Thr protein kinase family. In terms of tissue distribution, highly expressed in brain and weakly expressed in placenta and spinal cord.

It catalyses the reaction L-seryl-[protein] + ATP = O-phospho-L-seryl-[protein] + ADP + H(+). The enzyme catalyses L-threonyl-[protein] + ATP = O-phospho-L-threonyl-[protein] + ADP + H(+). This Homo sapiens (Human) protein is Ankyrin repeat and protein kinase domain-containing protein 1 (ANKK1).